The primary structure comprises 314 residues: Olfactory receptor 1E1 (314 aa).

At 1–25 (MMGQNQTSISDFLLLGLPIQPEQQN) the chain is on the extracellular side. An N-linked (GlcNAc...) asparagine glycan is attached at Asn-5. Residues 26–49 (LCYALFLAMYLTTLLGNLLIIVLI) form a helical membrane-spanning segment. Residues 50–57 (RLDSHLHT) are Cytoplasmic-facing. A helical transmembrane segment spans residues 58 to 79 (PMYLFLSNLSFSDLCFSSVTIP). Residues 80–100 (KLLQNMQNQDPSIPYADCLTQ) lie on the Extracellular side of the membrane. Cys-97 and Cys-189 are joined by a disulfide. A helical transmembrane segment spans residues 101 to 120 (MYFFLLFGDLESFLLVAMAY). The Cytoplasmic portion of the chain corresponds to 121-139 (DRYVAICFPLHYTAIMSPM). A helical membrane pass occupies residues 140–158 (LCLSVVALSWVLTTFHAML). Over 159–195 (HTLLMARLCFCADNVIPHFFCDMSALLKLACSDTRVN) the chain is Extracellular. A helical transmembrane segment spans residues 196–219 (EWVIFIMGGLILVIPFLLILGSYA). The Cytoplasmic portion of the chain corresponds to 220–236 (RIVSSILKVPSSKGICK). The chain crosses the membrane as a helical span at residues 237–259 (ALSTCGSHLSVVSLFYGTVIGLY). Over 260-272 (LCPSANSSTLKDT) the chain is Extracellular. The helical transmembrane segment at 273–292 (VMAMIYTVVTPMLNPFIYSL) threads the bilayer. The Cytoplasmic segment spans residues 293-314 (RNRDMKGALSRVIHQKKTFFSL).

Belongs to the G-protein coupled receptor 1 family.

The protein resides in the cell membrane. Odorant receptor. This is Olfactory receptor 1E1 (OR1E1) from Pan troglodytes (Chimpanzee).